The sequence spans 703 residues: Neoverrucotoxin subunit alpha (703 aa).

Residue S2 is modified to N-acetylserine. Positions 508 to 703 (PRMPFVQGYK…RFDHGTVRLL (196 aa)) constitute a B30.2/SPRY domain.

Belongs to the SNTX/VTX toxin family. Heterodimer of alpha and beta subunits. Post-translationally, not glycosylated. Four intrachain disulfide linkages are present in the heterodimer. No interchain disulfide bound links the two subunits. In terms of tissue distribution, expressed by the venom gland.

It is found in the secreted. Has hemolytic and lethal activities. Its hemolytic activity is inhibited by anionic lipids, especially potently by cardiolipin. This chain is Neoverrucotoxin subunit alpha, found in Synanceia verrucosa (Reef stonefish).